Consider the following 356-residue polypeptide: Caspase activity and apoptosis inhibitor 1 (356 aa).

The span at 1 to 14 (MTGKKSSREKRRKR) shows a compositional bias: basic residues. Disordered stretches follow at residues 1-24 (MTGK…ASLA) and 54-80 (VAGG…GSLQ). Serine 68 carries the phosphoserine modification. Threonine 69 carries the phosphothreonine modification. Lysine 84 participates in a covalent cross-link: Glycyl lysine isopeptide (Lys-Gly) (interchain with G-Cter in SUMO2). Phosphoserine occurs at positions 100 and 183. Residues 208–234 (DSTSSLRENKQPEVLESKQGKGEDSDV) form a disordered region. A compositionally biased stretch (basic and acidic residues) spans 214–231 (RENKQPEVLESKQGKGED). The stretch at 276-306 (ENTVQSEAGQIDDLERDIEKSVNEILGLAES) forms a coiled coil. Serine 307 is subject to Phosphoserine.

Functionally, anti-apoptotic protein that modulates a caspase-10 dependent mitochondrial caspase-3/9 feedback amplification loop. In Mus musculus (Mouse), this protein is Caspase activity and apoptosis inhibitor 1 (Caap1).